A 99-amino-acid polypeptide reads, in one-letter code: Nucleoid-associated protein LL0120 (99 aa).

It belongs to the YbaB/EbfC family. As to quaternary structure, homodimer.

It is found in the cytoplasm. The protein localises to the nucleoid. Its function is as follows. Binds to DNA and alters its conformation. May be involved in regulation of gene expression, nucleoid organization and DNA protection. The polypeptide is Nucleoid-associated protein LL0120 (ybcG) (Lactococcus lactis subsp. lactis (strain IL1403) (Streptococcus lactis)).